A 500-amino-acid chain; its full sequence is Maturase K (500 aa).

This sequence belongs to the intron maturase 2 family. MatK subfamily.

The protein resides in the plastid. The protein localises to the chloroplast. Usually encoded in the trnK tRNA gene intron. Probably assists in splicing its own and other chloroplast group II introns. The polypeptide is Maturase K (Proboscidea louisianica (Louisiana Devil's-claw)).